We begin with the raw amino-acid sequence, 117 residues long: Large ribosomal subunit protein bL20 (117 aa).

It belongs to the bacterial ribosomal protein bL20 family.

In terms of biological role, binds directly to 23S ribosomal RNA and is necessary for the in vitro assembly process of the 50S ribosomal subunit. It is not involved in the protein synthesizing functions of that subunit. In Ruminiclostridium cellulolyticum (strain ATCC 35319 / DSM 5812 / JCM 6584 / H10) (Clostridium cellulolyticum), this protein is Large ribosomal subunit protein bL20.